Consider the following 507-residue polypeptide: L-amino-acid oxidase (507 aa).

An N-terminal signal peptide occupies residues 1 to 19 (MNVLFIFSLLFLAALESCA). Cys-29 and Cys-192 are joined by a disulfide. FAD contacts are provided by residues 62 to 63 (MA), 82 to 83 (EA), Arg-90, and 106 to 109 (GPMR). Arg-109 contributes to the substrate binding site. N-linked (GlcNAc...) asparagine glycosylation is found at Asn-191 and Asn-213. Residue Val-280 participates in FAD binding. A disulfide bond links Cys-348 and Cys-429. N-linked (GlcNAc...) asparagine glycosylation occurs at Asn-378. Tyr-389 lines the substrate pocket. Residues Glu-473 and 480-485 (GWIDST) each bind FAD.

It belongs to the flavin monoamine oxidase family. FIG1 subfamily. In terms of assembly, homodimer; non-covalently linked. FAD serves as cofactor. As to expression, expressed by the venom gland.

It localises to the secreted. The enzyme catalyses an L-alpha-amino acid + O2 + H2O = a 2-oxocarboxylate + H2O2 + NH4(+). It catalyses the reaction L-leucine + O2 + H2O = 4-methyl-2-oxopentanoate + H2O2 + NH4(+). Catalyzes an oxidative deamination of predominantly hydrophobic and aromatic L-amino acids, thus producing hydrogen peroxide that may contribute to the diverse toxic effects of this enzyme. Shows activity on L-Leu. Exhibits diverse biological activities, such as hemorrhage, hemolysis, edema, apoptosis of vascular endothelial cells or tumor cell lines, antibacterial and antiparasitic activities. This protein induces platelet aggregation by both hydrogen peroxide production and binding to platelet membrane proteins (that would enhance the sensitivity of platelets to hydrogen peroxide). Effects of snake L-amino oxidases on platelets are controversial, since they either induce aggregation or inhibit agonist-induced aggregation. These different effects are probably due to different experimental conditions. In Naja atra (Chinese cobra), this protein is L-amino-acid oxidase.